A 429-amino-acid polypeptide reads, in one-letter code: Serine hydroxymethyltransferase (429 aa).

Residue 120-122 (GHI) participates in (6S)-5,6,7,8-tetrahydrofolate binding. An N6-(pyridoxal phosphate)lysine modification is found at K226.

This sequence belongs to the SHMT family. As to quaternary structure, homodimer. It depends on pyridoxal 5'-phosphate as a cofactor.

The protein localises to the cytoplasm. It functions in the pathway amino-acid biosynthesis; glycine biosynthesis; glycine from L-serine: step 1/1. Catalyzes the reversible interconversion of serine and glycine with a modified folate serving as the one-carbon carrier. Also exhibits a pteridine-independent aldolase activity toward beta-hydroxyamino acids, producing glycine and aldehydes, via a retro-aldol mechanism. The polypeptide is Serine hydroxymethyltransferase (Pyrobaculum arsenaticum (strain DSM 13514 / JCM 11321 / PZ6)).